Reading from the N-terminus, the 892-residue chain is Dipeptidyl peptidase 8 (892 aa).

Active-site charge relay system residues include S749, D827, and H859.

Belongs to the peptidase S9B family. DPPIV subfamily. In terms of assembly, homodimer. Forms a ternary complex with NLRP1, composed of a DPP8 homodimer, one full-length NLRP1 protein, and one cleaved C-terminus of NLRP1 (NACHT, LRR and PYD domains-containing protein 1, C-terminus). Forms a ternary complex with CARD8, composed of a DPP8 homodimer, one full-length NLRP1 protein, and one cleaved C-terminus of CARD8 (Caspase recruitment domain-containing protein 8, C-terminus). In the ternary complex, only one subunit of the DPP8 homodimer is bound to NLRP1 or CARD8.

Its subcellular location is the cytoplasm. It carries out the reaction Release of an N-terminal dipeptide, Xaa-Yaa-|-Zaa-, from a polypeptide, preferentially when Yaa is Pro, provided Zaa is neither Pro nor hydroxyproline.. Inhibited by zinc. Inhibited by the serine proteinase inhibitor 4-(2-aminoethyl)benzenesulphonyl fluoride (AEBSF), and by di-isopropylfluorophosphate. Specifically inhibited by isoindoline derivatives. Inhibited by Val-boroPro (Talabostat, PT-100), a non-selective inhibitor, which triggers pyroptosis in monocytes and macrophages. Its function is as follows. Dipeptidyl peptidase that cleaves off N-terminal dipeptides from proteins having a Pro or Ala residue at position 2. Acts as a key inhibitor of caspase-1-dependent monocyte and macrophage pyroptosis in resting cells by preventing activation of NLRP1 and CARD8. Sequesters the cleaved C-terminal part of NLRP1 and CARD8, which respectively constitute the active part of the NLRP1 and CARD8 inflammasomes, in a ternary complex, thereby preventing their oligomerization and activation. The dipeptidyl peptidase activity is required to suppress NLRP1 and CARD8; however, neither NLRP1 nor CARD8 are bona fide substrates of DPP8, suggesting the existence of substrate(s) required for NLRP1 and CARD8 inhibition. The sequence is that of Dipeptidyl peptidase 8 from Mus musculus (Mouse).